A 393-amino-acid chain; its full sequence is Methylthioribose kinase (393 aa).

ATP contacts are provided by residues asparagine 38, lysine 53, and 107–109 (EDL). A substrate-binding site is contributed by aspartate 225. 242-244 (DPE) lines the ATP pocket. Arginine 332 is a substrate binding site.

The protein belongs to the methylthioribose kinase family. Homodimer.

It carries out the reaction 5-(methylsulfanyl)-D-ribose + ATP = 5-(methylsulfanyl)-alpha-D-ribose 1-phosphate + ADP + H(+). It participates in amino-acid biosynthesis; L-methionine biosynthesis via salvage pathway; S-methyl-5-thio-alpha-D-ribose 1-phosphate from S-methyl-5'-thioadenosine (hydrolase route): step 2/2. Functionally, catalyzes the phosphorylation of methylthioribose into methylthioribose-1-phosphate. The chain is Methylthioribose kinase from Bacillus cereus (strain ZK / E33L).